The primary structure comprises 208 residues: ATP-dependent Clp protease proteolytic subunit 1 (208 aa).

Serine 108 functions as the Nucleophile in the catalytic mechanism. The active site involves histidine 133.

Belongs to the peptidase S14 family. Fourteen ClpP subunits assemble into 2 heptameric rings which stack back to back to give a disk-like structure with a central cavity, resembling the structure of eukaryotic proteasomes.

The protein localises to the cytoplasm. It catalyses the reaction Hydrolysis of proteins to small peptides in the presence of ATP and magnesium. alpha-casein is the usual test substrate. In the absence of ATP, only oligopeptides shorter than five residues are hydrolyzed (such as succinyl-Leu-Tyr-|-NHMec, and Leu-Tyr-Leu-|-Tyr-Trp, in which cleavage of the -Tyr-|-Leu- and -Tyr-|-Trp bonds also occurs).. In terms of biological role, cleaves peptides in various proteins in a process that requires ATP hydrolysis. Has a chymotrypsin-like activity. Plays a major role in the degradation of misfolded proteins. The protein is ATP-dependent Clp protease proteolytic subunit 1 of Corynebacterium efficiens (strain DSM 44549 / YS-314 / AJ 12310 / JCM 11189 / NBRC 100395).